A 633-amino-acid chain; its full sequence is Mitochondrial Rho GTPase 1 (633 aa).

The 170-residue stretch at 1-170 (MATVRICVCG…FFLCQKAVTH (170 aa)) folds into the Miro 1 domain. Over 1 to 603 (MATVRICVCG…PRSEEDVEGK (603 aa)) the chain is Cytoplasmic. Residues 10-17 (GDEGTGKS), 59-63 (DTSAL), and 115-118 (NKSD) each bind GTP. EF-hand domains are found at residues 186 to 221 (AAVA…CFEK) and 306 to 341 (EGYR…TPGL). 9 residues coordinate Ca(2+): Asp-199, Asp-201, Asp-203, Tyr-205, Glu-210, Asp-319, Asp-321, Asp-323, and Glu-330. Positions 398–418 (NPSTTAALKVTRPRKRRKRPG) are disordered. A compositionally biased stretch (basic residues) spans 408–418 (TRPRKRRKRPG). The Miro 2 domain occupies 422-588 (RNVVLGHVLG…FVHIAEAAME (167 aa)). GTP-binding positions include 431 to 438 (GPPGSGKS), 467 to 471 (ELPGG), and 537 to 540 (LKAD). A helical; Anchor for type IV membrane protein transmembrane segment spans residues 604–624 (WMAWGIALGAVVCAGAAAVMI). Topologically, residues 625–633 (WRRVSGSGT) are mitochondrial intermembrane.

It belongs to the mitochondrial Rho GTPase family.

It is found in the mitochondrion outer membrane. Functionally, mitochondrial GTPase involved in mitochondrial trafficking. Probably involved in control of anterograde transport of mitochondria and their subcellular distribution. The sequence is that of Mitochondrial Rho GTPase 1 (gem1) from Aspergillus oryzae (strain ATCC 42149 / RIB 40) (Yellow koji mold).